The primary structure comprises 283 residues: Shikimate dehydrogenase (NADP(+)) (283 aa).

Residues 19 to 21 (SRS) and T66 each bind shikimate. The Proton acceptor role is filled by K70. Position 82 (E82) interacts with NADP(+). The shikimate site is built by N91 and D107. NADP(+) is bound by residues 133-137 (GAGGA) and I226. Y228 contacts shikimate. G249 is an NADP(+) binding site.

Belongs to the shikimate dehydrogenase family. Homodimer.

The catalysed reaction is shikimate + NADP(+) = 3-dehydroshikimate + NADPH + H(+). The protein operates within metabolic intermediate biosynthesis; chorismate biosynthesis; chorismate from D-erythrose 4-phosphate and phosphoenolpyruvate: step 4/7. Functionally, involved in the biosynthesis of the chorismate, which leads to the biosynthesis of aromatic amino acids. Catalyzes the reversible NADPH linked reduction of 3-dehydroshikimate (DHSA) to yield shikimate (SA). This is Shikimate dehydrogenase (NADP(+)) from Rhodospirillum rubrum (strain ATCC 11170 / ATH 1.1.1 / DSM 467 / LMG 4362 / NCIMB 8255 / S1).